Reading from the N-terminus, the 469-residue chain is Cytochrome P450 85A1 (469 aa).

Residues 1-21 (MVLVAIGVVVAAAVVVSSLLL) traverse the membrane as a helical segment. Position 419 (Cys-419) interacts with heme.

The protein belongs to the cytochrome P450 family. The cofactor is heme. In terms of tissue distribution, expressed at low levels in all the tissues, but preferentially in the leaf sheath.

The protein resides in the membrane. It carries out the reaction 6-deoxoteasterone + reduced [NADPH--hemoprotein reductase] + O2 = 6alpha-hydroxyteasterone + oxidized [NADPH--hemoprotein reductase] + H2O + H(+). It catalyses the reaction 6alpha-hydroxytyphasterol + reduced [NADPH--hemoprotein reductase] + O2 = teasterone + oxidized [NADPH--hemoprotein reductase] + 2 H2O + H(+). The enzyme catalyses 3-dehydro-6-deoxoteasterone + reduced [NADPH--hemoprotein reductase] + O2 = 3-dehydro-6alpha-hydroxyteasterone + oxidized [NADPH--hemoprotein reductase] + H2O + H(+). The catalysed reaction is 3-dehydro-6alpha-hydroxyteasterone + reduced [NADPH--hemoprotein reductase] + O2 = 3-dehydroteasterone + oxidized [NADPH--hemoprotein reductase] + 2 H2O + H(+). It carries out the reaction 6-deoxotyphasterol + reduced [NADPH--hemoprotein reductase] + O2 = 6alpha-hydroxytyphasterol + oxidized [NADPH--hemoprotein reductase] + H2O + H(+). It catalyses the reaction 6alpha-hydroxytyphasterol + reduced [NADPH--hemoprotein reductase] + O2 = typhasterol + oxidized [NADPH--hemoprotein reductase] + 2 H2O + H(+). The enzyme catalyses 3-dehydro-6-deoxoteasterone + 2 reduced [NADPH--hemoprotein reductase] + 2 O2 = 3-dehydroteasterone + 2 oxidized [NADPH--hemoprotein reductase] + 3 H2O + 2 H(+). The catalysed reaction is 6-deoxoteasterone + 2 reduced [NADPH--hemoprotein reductase] + 2 O2 = teasterone + 2 oxidized [NADPH--hemoprotein reductase] + 3 H2O + 2 H(+). It carries out the reaction 6-deoxotyphasterol + 2 reduced [NADPH--hemoprotein reductase] + 2 O2 = typhasterol + 2 oxidized [NADPH--hemoprotein reductase] + 3 H2O + 2 H(+). Its pathway is plant hormone biosynthesis; brassinosteroid biosynthesis. In terms of biological role, catalyzes the C6-oxidation step in brassinosteroids biosynthesis. May convert 6-deoxoteasterone (6-deoxoTE) to teasterone (TE), 3-dehydro-6-deoxoteasterone (6-deoxo3DT, 6-deoxo3DHT) to 3-dehydroteasterone (3DT, 3-DHT), and 6-deoxotyphasterol (6-deoxoTY) to typhasterol (TY). Involved in the organization and elongation of the leaf and stem cells. Not able to convert 6-deoxocastasterone (6-deoxoCS) and castasterone (CS) to brassinolide (BL). The polypeptide is Cytochrome P450 85A1 (Oryza sativa subsp. japonica (Rice)).